The sequence spans 240 residues: Putative exosome complex component RRP41 (240 aa).

The protein belongs to the RNase PH family. As to quaternary structure, component of the RNA exosome complex.

The protein resides in the cytoplasm. The protein localises to the nucleus. It is found in the nucleolus. Its subcellular location is the nucleoplasm. Its function is as follows. Non-catalytic component of the RNA exosome complex which has 3'-&gt;5' exoribonuclease activity and participates in a multitude of cellular RNA processing and degradation events. The protein is Putative exosome complex component RRP41 (exos-4.1) of Caenorhabditis elegans.